Consider the following 109-residue polypeptide: Thiosulfate sulfurtransferase GlpE (109 aa).

The 89-residue stretch at 17–105 (KEGKTALVDI…WARSYPQDIT (89 aa)) folds into the Rhodanese domain. The active-site Cysteine persulfide intermediate is Cys65.

Belongs to the GlpE family.

The protein resides in the cytoplasm. It carries out the reaction thiosulfate + hydrogen cyanide = thiocyanate + sulfite + 2 H(+). It catalyses the reaction thiosulfate + [thioredoxin]-dithiol = [thioredoxin]-disulfide + hydrogen sulfide + sulfite + 2 H(+). Its function is as follows. Transferase that catalyzes the transfer of sulfur from thiosulfate to thiophilic acceptors such as cyanide or dithiols. May function in a CysM-independent thiosulfate assimilation pathway by catalyzing the conversion of thiosulfate to sulfite, which can then be used for L-cysteine biosynthesis. The protein is Thiosulfate sulfurtransferase GlpE of Yersinia pestis bv. Antiqua (strain Antiqua).